The sequence spans 366 residues: Chorismate synthase (366 aa).

NADP(+)-binding residues include arginine 48 and arginine 54. FMN-binding positions include 125-127 (RSS), 238-239 (NA), glycine 278, 293-297 (KPTSS), and arginine 319.

It belongs to the chorismate synthase family. In terms of assembly, homotetramer. FMNH2 is required as a cofactor.

It catalyses the reaction 5-O-(1-carboxyvinyl)-3-phosphoshikimate = chorismate + phosphate. It participates in metabolic intermediate biosynthesis; chorismate biosynthesis; chorismate from D-erythrose 4-phosphate and phosphoenolpyruvate: step 7/7. Catalyzes the anti-1,4-elimination of the C-3 phosphate and the C-6 proR hydrogen from 5-enolpyruvylshikimate-3-phosphate (EPSP) to yield chorismate, which is the branch point compound that serves as the starting substrate for the three terminal pathways of aromatic amino acid biosynthesis. This reaction introduces a second double bond into the aromatic ring system. The protein is Chorismate synthase of Pseudoalteromonas atlantica (strain T6c / ATCC BAA-1087).